Consider the following 529-residue polypeptide: UDP-glucuronosyltransferase 2B1 (529 aa).

Residues 1-23 (MSMKQTSVFLLIQLICYFRPGAC) form the signal peptide. Residues Asn134 and Asn316 are each glycosylated (N-linked (GlcNAc...) asparagine). The helical transmembrane segment at 494–510 (VIGFLLLCVVGVVFIIT) threads the bilayer.

It belongs to the UDP-glycosyltransferase family.

Its subcellular location is the endoplasmic reticulum membrane. The enzyme catalyses glucuronate acceptor + UDP-alpha-D-glucuronate = acceptor beta-D-glucuronoside + UDP + H(+). It carries out the reaction 17beta-estradiol + UDP-alpha-D-glucuronate = 17beta-estradiol 17-O-(beta-D-glucuronate) + UDP + H(+). UDP-glucuronosyltransferase (UGT) that catalyzes phase II biotransformation reactions in which lipophilic substrates are conjugated with glucuronic acid to increase the metabolite's water solubility, thereby facilitating excretion into either the urine or bile. Essential for the elimination and detoxification of drugs, xenobiotics and endogenous compounds. Catalyzes the glucuronidation of the endogenous estrogen hormone estradiol. The polypeptide is UDP-glucuronosyltransferase 2B1 (Rattus norvegicus (Rat)).